The chain runs to 205 residues: H/ACA ribonucleoprotein complex subunit GAR1 (205 aa).

A compositionally biased stretch (gly residues) spans methionine 1 to threonine 23. The interval methionine 1–glutamine 31 is disordered. Arginine 4 is subject to Asymmetric dimethylarginine; by HMT1. Residues arginine 4–glycine 21 are RGG-box 1. Arginine 8 is subject to Asymmetric dimethylarginine; by HMT1; alternate. Omega-N-methylarginine; by HMT1; alternate is present on arginine 8. Arginine 11 carries the post-translational modification Asymmetric dimethylarginine; by HMT1. Arginine 15 bears the Asymmetric dimethylarginine; by HMT1; alternate mark. Position 15 is an omega-N-methylarginine; by HMT1; alternate (arginine 15). At arginine 19 the chain carries Asymmetric dimethylarginine; by HMT1. Lysine 77 is covalently cross-linked (Glycyl lysine isopeptide (Lys-Gly) (interchain with G-Cter in ubiquitin)). The segment at proline 124 to arginine 205 is disordered. Residues alanine 143–arginine 205 are compositionally biased toward gly residues. 3 positions are modified to asymmetric dimethylarginine; by HMT1; alternate: arginine 147, arginine 154, and arginine 158. Arginine 147, arginine 154, and arginine 158 each carry omega-N-methylarginine; by HMT1; alternate. The tract at residues arginine 147–arginine 205 is RGG-box 2. Arginine 162 is subject to Asymmetric dimethylarginine; by HMT1. Arginine 165 bears the Asymmetric dimethylarginine; by HMT1; alternate mark. Arginine 165 is subject to Omega-N-methylarginine; by HMT1; alternate. Arginine 171 and arginine 174 each carry asymmetric dimethylarginine; by HMT1. Omega-N-methylarginine; by HMT1 is present on residues arginine 180 and arginine 184. Asymmetric dimethylarginine; by HMT1; alternate is present on arginine 189. Arginine 189 carries the post-translational modification Omega-N-methylarginine; by HMT1; alternate. 3 positions are modified to asymmetric dimethylarginine; by HMT1: arginine 193, arginine 197, and arginine 201.

It belongs to the GAR1 family. Component of the small nucleolar ribonucleoprotein particles containing H/ACA-type snoRNAs (H/ACA snoRNPs). The protein component of the H/ACA snoRNP contains CBF5, GAR1, NHP2 and NOP10. The complex contains a stable core composed of CBF5 and NOP10, to which GAR1 and NHP2 subsequently bind. Interacts with snoRNAs. Post-translationally, methylated by HMT1, forming asymmetric dimethylarginines (DMA) within a domain referred to as an RGG box, made up of repeated Gly-Gly dipeptides interspersed with Arg and aromatic residues.

Its subcellular location is the nucleus. It is found in the nucleolus. In terms of biological role, non-catalytic component of the H/ACA small nucleolar ribonucleoprotein (H/ACA snoRNP), which catalyzes pseudouridylation of rRNA and is required for ribosome biogenesis. This involves the isomerization of uridine such that the ribose is subsequently attached to C5, instead of the normal N1. Pseudouridine ('psi') residues may serve to stabilize the conformation of rRNAs. The H/ACA snoRNP complex also mediates pseudouridylation of other types of RNAs. The H/ACA snoRNP complex mediates pseudouridylation at position 93 in U2 snRNA. Essential for growth. This chain is H/ACA ribonucleoprotein complex subunit GAR1, found in Saccharomyces cerevisiae (strain ATCC 204508 / S288c) (Baker's yeast).